Reading from the N-terminus, the 1038-residue chain is Pentatricopeptide repeat-containing protein At5g27270 (1038 aa).

The segment covering 23–38 has biased composition (low complexity); the sequence is SRNSRISIKSSSSSSK. The tract at residues 23-69 is disordered; that stretch reads SRNSRISIKSSSSSSKVRPDPWSLSDGNPEKPKPRYERPKHPLSDDD. The span at 50 to 69 shows a compositional bias: basic and acidic residues; the sequence is NPEKPKPRYERPKHPLSDDD. PPR repeat units lie at residues 187 to 221, 222 to 256, 257 to 291, 292 to 326, 327 to 361, 362 to 396, 397 to 431, 432 to 466, 467 to 501, 502 to 535, 536 to 570, 601 to 631, 634 to 668, 669 to 699, 703 to 737, 738 to 772, 773 to 807, 808 to 842, 843 to 877, 878 to 912, 913 to 947, 948 to 982, and 983 to 1017; these read SVVV…GCEP, DAVA…RILL, STSV…GVPP, NEFT…GFVP, EEVT…GIVP, SNYT…KIPA, DEVI…NLLA, DEKT…DIPL, SRFA…GLPD, ASSC…QVHF, DIEL…ARVK, DVMA…MFKT, GSSA…GLRM, EEET…AGES, GKSV…GCDP, GAVT…NIEL, DTVG…GVPC, SIQT…GLYL, DEKI…GIKP, GTPS…GRCT, DLST…GIPL, SHSH…GISP, and DSAC…SVED.

The protein belongs to the PPR family. P subfamily.

The polypeptide is Pentatricopeptide repeat-containing protein At5g27270 (EMB976) (Arabidopsis thaliana (Mouse-ear cress)).